The following is a 732-amino-acid chain: Prolyl endopeptidase-like (732 aa).

Residues Ser-575, Asp-661, and His-707 each act as charge relay system in the active site.

It belongs to the peptidase S9A family. As to quaternary structure, homodimer.

It is found in the cytoplasm. Its subcellular location is the cytosol. Serine peptidase whose precise substrate specificity remains unclear. Does not cleave peptides after a arginine or lysine residue. Regulates trans-Golgi network morphology and sorting by regulating the membrane binding of the AP-1 complex. May play a role in the regulation of synaptic vesicle exocytosis. The sequence is that of Prolyl endopeptidase-like (PREPL) from Gallus gallus (Chicken).